The sequence spans 504 residues: Glucose-6-phosphate isomerase (504 aa).

The active-site Proton donor is the Glu333. Catalysis depends on residues His364 and Lys473.

It belongs to the GPI family.

It is found in the cytoplasm. The enzyme catalyses alpha-D-glucose 6-phosphate = beta-D-fructose 6-phosphate. It participates in carbohydrate biosynthesis; gluconeogenesis. It functions in the pathway carbohydrate degradation; glycolysis; D-glyceraldehyde 3-phosphate and glycerone phosphate from D-glucose: step 2/4. In terms of biological role, catalyzes the reversible isomerization of glucose-6-phosphate to fructose-6-phosphate. The sequence is that of Glucose-6-phosphate isomerase from Xanthomonas euvesicatoria pv. vesicatoria (strain 85-10) (Xanthomonas campestris pv. vesicatoria).